The chain runs to 231 residues: Orotidine 5'-phosphate decarboxylase (231 aa).

Residues Asp-11, Lys-33, 60–69, Thr-119, Arg-180, Gln-189, Gly-209, and Arg-210 each bind substrate; that span reads DLKFHDIPNT. Residue Lys-62 is the Proton donor of the active site.

The protein belongs to the OMP decarboxylase family. Type 1 subfamily. As to quaternary structure, homodimer.

The catalysed reaction is orotidine 5'-phosphate + H(+) = UMP + CO2. The protein operates within pyrimidine metabolism; UMP biosynthesis via de novo pathway; UMP from orotate: step 2/2. Its function is as follows. Catalyzes the decarboxylation of orotidine 5'-monophosphate (OMP) to uridine 5'-monophosphate (UMP). The protein is Orotidine 5'-phosphate decarboxylase of Idiomarina loihiensis (strain ATCC BAA-735 / DSM 15497 / L2-TR).